A 417-amino-acid chain; its full sequence is Acetate kinase (417 aa).

Position 7 (N7) interacts with Mg(2+). K14 is an ATP binding site. Residue R104 coordinates substrate. D162 (proton donor/acceptor) is an active-site residue. ATP is bound by residues 222–226, 297–299, and 346–350; these read HLGNG, DMR, and GIGEN. A Mg(2+)-binding site is contributed by E401.

Belongs to the acetokinase family. As to quaternary structure, homodimer. Requires Mg(2+) as cofactor. The cofactor is Mn(2+).

It localises to the cytoplasm. It carries out the reaction acetate + ATP = acetyl phosphate + ADP. Its pathway is metabolic intermediate biosynthesis; acetyl-CoA biosynthesis; acetyl-CoA from acetate: step 1/2. In terms of biological role, catalyzes the formation of acetyl phosphate from acetate and ATP. Can also catalyze the reverse reaction. In Chloroherpeton thalassium (strain ATCC 35110 / GB-78), this protein is Acetate kinase.